The sequence spans 55 residues: Large ribosomal subunit protein bL33 (55 aa).

The protein belongs to the bacterial ribosomal protein bL33 family.

The sequence is that of Large ribosomal subunit protein bL33 from Hamiltonella defensa subsp. Acyrthosiphon pisum (strain 5AT).